We begin with the raw amino-acid sequence, 155 residues long: Small ribosomal subunit protein uS7c (155 aa).

It belongs to the universal ribosomal protein uS7 family. As to quaternary structure, part of the 30S ribosomal subunit.

Its subcellular location is the plastid. It is found in the chloroplast. Functionally, one of the primary rRNA binding proteins, it binds directly to 16S rRNA where it nucleates assembly of the head domain of the 30S subunit. This Lilium superbum (Turk's cap lily) protein is Small ribosomal subunit protein uS7c (rps7).